The primary structure comprises 119 residues: Circadian clock oscillator protein KaiB (119 aa).

It belongs to the KaiB family. In terms of assembly, the KaiABC complex composition changes during the circadian cycle to control KaiC phosphorylation. Complexes KaiC(6), KaiA(2-4):KaiC(6), KaiB(6):KaiC(6) and KaiC(6):KaiB(6):KaiA(12) are among the most important forms, many form cooperatively. Undergoes a major conformational rearrangment; in the free state forms homotetramers as a dimer of dimers. When bound to the CI domain of KaiC switches to a monomeric thioredoxin-fold (KaiB(fs)). KaiB(fs) binds CikA, leading it to dephosphorylate phospho-RpaA.

Key component of the KaiABC oscillator complex, which constitutes the main circadian regulator in cyanobacteria. Complex composition changes during the circadian cycle to control KaiC phosphorylation. KaiA stimulates KaiC autophosphorylation, while KaiB sequesters KaiA, leading to KaiC autodephosphorylation. Phospho-Ser-431 KaiC accumulation triggers binding of KaiB to form the KaiB(6):KaiC(6) complex, leading to changes in output regulators CikA and SasA. KaiB switches to a thioredoxin-like fold (KaiB(fs)) when bound to KaiC. KaiB(6):KaiC(6) formation exposes a site for KaiA binding that sequesters KaiA from KaiC, making the KaiC(6):KaiB(6):KaiA(12) complex that results in KaiC autodephosphorylation. Its function is as follows. A metamorphic protein which reversibly switches between an inactive tetrameric fold and a rare, thioredoxin-like monomeric fold (KaiB(fs)). KaiB(fs) binds phospho-KaiC, KaiA and CikA. KaiA and CikA compete for binding to KaiB(fs), and KaiB(fs) and SasA compete for binding to KaiC, thus the clock oscillator and output signal pathway are tightly coupled. The chain is Circadian clock oscillator protein KaiB from Synechococcus sp. (strain CC9311).